The chain runs to 156 residues: ATP synthase subunit b (156 aa).

The helical transmembrane segment at 11-31 threads the bilayer; that stretch reads AIAFILFVAFCMKYVWPPLMA.

Belongs to the ATPase B chain family. In terms of assembly, F-type ATPases have 2 components, F(1) - the catalytic core - and F(0) - the membrane proton channel. F(1) has five subunits: alpha(3), beta(3), gamma(1), delta(1), epsilon(1). F(0) has three main subunits: a(1), b(2) and c(10-14). The alpha and beta chains form an alternating ring which encloses part of the gamma chain. F(1) is attached to F(0) by a central stalk formed by the gamma and epsilon chains, while a peripheral stalk is formed by the delta and b chains.

Its subcellular location is the cell inner membrane. Functionally, f(1)F(0) ATP synthase produces ATP from ADP in the presence of a proton or sodium gradient. F-type ATPases consist of two structural domains, F(1) containing the extramembraneous catalytic core and F(0) containing the membrane proton channel, linked together by a central stalk and a peripheral stalk. During catalysis, ATP synthesis in the catalytic domain of F(1) is coupled via a rotary mechanism of the central stalk subunits to proton translocation. Its function is as follows. Component of the F(0) channel, it forms part of the peripheral stalk, linking F(1) to F(0). The chain is ATP synthase subunit b from Erwinia tasmaniensis (strain DSM 17950 / CFBP 7177 / CIP 109463 / NCPPB 4357 / Et1/99).